Consider the following 1038-residue polypeptide: Activated CDC42 kinase 1 (1038 aa).

The segment at 1–110 (MQPEEGTGWL…TSPAPGGPAG (110 aa)) is SAM-like domain. Residues 90 to 114 (PPHHSQSTFRKTSPAPGGPAGEGPL) form a disordered region. In terms of domain architecture, Protein kinase spans 126–385 (LRLLEKLGDG…PTFVALRDFL (260 aa)). Residues 132-140 (LGDGSFGVV) and lysine 158 contribute to the ATP site. Catalysis depends on aspartate 252, which acts as the Proton acceptor. Tyrosine 284 is modified (phosphotyrosine; by SRC and autocatalysis). Residues 388–448 (AQPTDMRALQ…PRNVVTSVAG (61 aa)) enclose the SH3 domain. A CRIB domain is found at 454–466 (ISQPLQNSFIHTG). The interval 497–535 (LSVELSTSRPPQHLGGVKKPTYDPVSEDQDPLSSDFKRL) is disordered. Tyrosine 518 carries the post-translational modification Phosphotyrosine. The required for interaction with SRC stretch occupies residues 623 to 652 (DWDARPLPPPPAYDDVAQDEDDFEICSINS). Positions 632–635 (PPAY) are required for interaction with NEDD4. Disordered stretches follow at residues 659 to 702 (VPAG…SSAQ) and 718 to 840 (LQAP…GPRA). Serine 724 is subject to Phosphoserine. The segment at 733–876 (GDDKPQVPPR…SYLERYQRFL (144 aa)) is EBD domain. Pro residues-rich tracts occupy residues 738-749 (QVPPRVPIPPRP), 772-783 (PASPPRVPPREP), and 794-805 (PLVPPGSSPLPP). Phosphotyrosine is present on tyrosine 827. Arginine 839 is subject to Omega-N-methylarginine. Phosphotyrosine occurs at positions 859 and 872. The residue at position 881 (serine 881) is a Phosphoserine. The interval 917 to 957 (LDPKANFSTNNSNPGARPPPPRATARLPQRGCPGDGPEAGR) is disordered. In terms of domain architecture, UBA spans 958 to 996 (PADKIQMAMVHGVTTEECQAALQCHGWSVQRAAQYLKVE).

Belongs to the protein kinase superfamily. Tyr protein kinase family. In terms of assembly, interacts with NEDD4 (via WW3 domain). NEDD4L and EGF promote association with NEDD4. Homodimer. Interacts with AR, CDC42, WWASL and WWOX. Interacts with CSPG4 (activated). Interacts with MERTK (activated); stimulates autophosphorylation. May interact (phosphorylated) with HSP90AB1; maintains kinase activity. Interacts with NPHP1. Interacts with SNX9 (via SH3 domain). Interacts with SRC (via SH2 and SH3 domain). Interacts with EGFR, and this interaction is dependent on EGF stimulation and kinase activity of EGFR. Interacts (via kinase domain) with AKT1. Part of a collagen stimulated complex involved in cell migration composed of CDC42, CRK, TNK2 and BCAR1/p130cas. Interacts with BCAR1/p130cas via SH3 domains. Forms complexes with GRB2 and numerous receptor tyrosine kinases (RTK) including LTK, AXL or PDGFRL, in which GRB2 promotes RTK recruitment by TNK2. It depends on Mg(2+) as a cofactor. Autophosphorylation regulates kinase activity. Phosphorylation on Tyr-518 is required for interaction with SRC and is observed during association with clathrin-coated pits. In terms of processing, polyubiquitinated by NEDD4 and NEDD4L. Degradation can be induced by EGF and is lysosome-dependent. As to expression, the Tyr-284 phosphorylated form shows a significant increase in expression in breast cancers during the progressive stages i.e. normal to hyperplasia (ADH), ductal carcinoma in situ (DCIS), invasive ductal carcinoma (IDC) and lymph node metastatic (LNMM) stages. It also shows a significant increase in expression in prostate cancers during the progressive stages.

The protein resides in the cell membrane. The protein localises to the nucleus. It is found in the endosome. Its subcellular location is the cell junction. It localises to the adherens junction. The protein resides in the cytoplasmic vesicle membrane. The protein localises to the cytoplasmic vesicle. It is found in the clathrin-coated vesicle. Its subcellular location is the membrane. It localises to the clathrin-coated pit. The protein resides in the cytoplasm. The protein localises to the perinuclear region. It is found in the cytosol. The catalysed reaction is L-tyrosyl-[protein] + ATP = O-phospho-L-tyrosyl-[protein] + ADP + H(+). It catalyses the reaction L-seryl-[protein] + ATP = O-phospho-L-seryl-[protein] + ADP + H(+). It carries out the reaction L-threonyl-[protein] + ATP = O-phospho-L-threonyl-[protein] + ADP + H(+). With respect to regulation, inhibited by AIM-100 (4-amino-5,6-biaryl-furo[2,3-d]pyrimidine), which suppresses activating phosphorylation at Tyr-284. Repressed by dasatinib. Non-receptor tyrosine-protein and serine/threonine-protein kinase that is implicated in cell spreading and migration, cell survival, cell growth and proliferation. Transduces extracellular signals to cytosolic and nuclear effectors. Phosphorylates AKT1, AR, MCF2, WASL and WWOX. Implicated in trafficking and clathrin-mediated endocytosis through binding to epidermal growth factor receptor (EGFR) and clathrin. Binds to both poly- and mono-ubiquitin and regulates ligand-induced degradation of EGFR, thereby contributing to the accumulation of EGFR at the limiting membrane of early endosomes. Downstream effector of CDC42 which mediates CDC42-dependent cell migration via phosphorylation of BCAR1. May be involved both in adult synaptic function and plasticity and in brain development. Activates AKT1 by phosphorylating it on 'Tyr-176'. Phosphorylates AR on 'Tyr-267' and 'Tyr-363' thereby promoting its recruitment to androgen-responsive enhancers (AREs). Phosphorylates WWOX on 'Tyr-287'. Phosphorylates MCF2, thereby enhancing its activity as a guanine nucleotide exchange factor (GEF) toward Rho family proteins. Contributes to the control of AXL receptor levels. Confers metastatic properties on cancer cells and promotes tumor growth by negatively regulating tumor suppressor such as WWOX and positively regulating pro-survival factors such as AKT1 and AR. Phosphorylates WASP. The polypeptide is Activated CDC42 kinase 1 (TNK2) (Homo sapiens (Human)).